We begin with the raw amino-acid sequence, 532 residues long: Tyrosine-protein kinase Src-1 (532 aa).

The disordered stretch occupies residues 1-52; it reads MGATKSKPREGGPRSRSLDIVEGSHQPFTSLSASQTPNKSLDSHRPPAQPFG. Gly-2 carries N-myristoyl glycine lipidation. The segment covering 7–19 has biased composition (basic and acidic residues); it reads KPREGGPRSRSLD. The segment covering 26–40 has biased composition (polar residues); the sequence is QPFTSLSASQTPNKS. Positions 80–141 constitute an SH3 domain; it reads GGVTTFVALY…PSNYVAPSDS (62 aa). The SH2 domain occupies 147–244; it reads WYLGKITRRE…GLCHRLTTVC (98 aa). The 254-residue stretch at 266 to 519 folds into the Protein kinase domain; sequence LRLELKLGQG…YLQAFLEDYF (254 aa). ATP is bound by residues 272–280 and Lys-294; that span reads LGQGCFGEV. Asp-385 acts as the Proton acceptor in catalysis. Tyr-415 is modified (phosphotyrosine; by autocatalysis).

The protein belongs to the protein kinase superfamily. Tyr protein kinase family. SRC subfamily.

It is found in the cell membrane. It catalyses the reaction L-tyrosyl-[protein] + ATP = O-phospho-L-tyrosyl-[protein] + ADP + H(+). This is Tyrosine-protein kinase Src-1 (src-a) from Xenopus laevis (African clawed frog).